The following is a 425-amino-acid chain: Histidine--tRNA ligase (425 aa).

This sequence belongs to the class-II aminoacyl-tRNA synthetase family. In terms of assembly, homodimer.

The protein resides in the cytoplasm. It carries out the reaction tRNA(His) + L-histidine + ATP = L-histidyl-tRNA(His) + AMP + diphosphate + H(+). The polypeptide is Histidine--tRNA ligase (Histophilus somni (strain 2336) (Haemophilus somnus)).